Consider the following 231-residue polypeptide: LexA repressor (231 aa).

Positions 26-46 (FDEMKLALDLRSKSGIHRLIT) form a DNA-binding region, H-T-H motif. Residues 79-98 (VGFQPRVIDGDRPDRPRPAN) are disordered. A compositionally biased stretch (basic and acidic residues) spans 86-95 (IDGDRPDRPR). Catalysis depends on for autocatalytic cleavage activity residues S152 and K190.

This sequence belongs to the peptidase S24 family. In terms of assembly, homodimer.

It carries out the reaction Hydrolysis of Ala-|-Gly bond in repressor LexA.. Functionally, represses a number of genes involved in the response to DNA damage (SOS response), including recA and lexA. In the presence of single-stranded DNA, RecA interacts with LexA causing an autocatalytic cleavage which disrupts the DNA-binding part of LexA, leading to derepression of the SOS regulon and eventually DNA repair. This Ruegeria pomeroyi (strain ATCC 700808 / DSM 15171 / DSS-3) (Silicibacter pomeroyi) protein is LexA repressor.